The chain runs to 463 residues: Mitochondrial dynamics protein MID49 (463 aa).

The Mitochondrial intermembrane portion of the chain corresponds to 1 to 24 (MAELQIRKKEKKSGDGIGTMVDFL). Residues 25-47 (LANARLVLGVGGAAMLGIATLAV) form a helical membrane-spanning segment. The Cytoplasmic segment spans residues 48 to 463 (KRLIDRATSP…EPDDVLKRER (416 aa)). The segment at 87 to 119 (TLRRKEDLEHHCAPLSLPDPSQKMPEATGTSQV) is disordered. Over residues 89 to 98 (RRKEDLEHHC) the composition is skewed to basic and acidic residues.

Belongs to the MID49/MID51 family.

The protein resides in the mitochondrion outer membrane. In terms of biological role, mitochondrial outer membrane protein which regulates mitochondrial organization. It is required for mitochondrial fission and promotes the recruitment and association of the fission mediator dynamin-related protein 1 (DNM1L) to the mitochondrial surface independently of the mitochondrial fission FIS1 and MFF proteins. Regulates DNM1L GTPase activity. This is Mitochondrial dynamics protein MID49 (mief2) from Xenopus laevis (African clawed frog).